Here is a 405-residue protein sequence, read N- to C-terminus: Putative colanic acid biosynthesis glycosyl transferase WcaC (405 aa).

It participates in slime biogenesis; slime polysaccharide biosynthesis. The polypeptide is Putative colanic acid biosynthesis glycosyl transferase WcaC (wcaC) (Escherichia coli (strain K12)).